A 470-amino-acid polypeptide reads, in one-letter code: Argininosuccinate lyase (470 aa).

It belongs to the lyase 1 family. Argininosuccinate lyase subfamily.

It is found in the cytoplasm. The catalysed reaction is 2-(N(omega)-L-arginino)succinate = fumarate + L-arginine. It functions in the pathway amino-acid biosynthesis; L-arginine biosynthesis; L-arginine from L-ornithine and carbamoyl phosphate: step 3/3. This Mycobacterium sp. (strain JLS) protein is Argininosuccinate lyase.